The primary structure comprises 302 residues: Ornithine carbamoyltransferase (302 aa).

Carbamoyl phosphate is bound by residues 53–56 (STRT), Gln80, Arg104, and 131–134 (HPCQ). L-ornithine contacts are provided by residues Asn162, Asp219, and 223 to 224 (SM). Carbamoyl phosphate is bound by residues 259 to 260 (CL) and Arg287.

Belongs to the aspartate/ornithine carbamoyltransferase superfamily. OTCase family.

It localises to the cytoplasm. The catalysed reaction is carbamoyl phosphate + L-ornithine = L-citrulline + phosphate + H(+). It participates in amino-acid biosynthesis; L-arginine biosynthesis; L-arginine from L-ornithine and carbamoyl phosphate: step 1/3. Its function is as follows. Reversibly catalyzes the transfer of the carbamoyl group from carbamoyl phosphate (CP) to the N(epsilon) atom of ornithine (ORN) to produce L-citrulline. In Hydrogenovibrio crunogenus (strain DSM 25203 / XCL-2) (Thiomicrospira crunogena), this protein is Ornithine carbamoyltransferase.